The following is a 143-amino-acid chain: Heat shock protein Hsp-16.48/Hsp-16.49 (143 aa).

In terms of domain architecture, sHSP spans 35–140; that stretch reads HNSFNFSDNI…SSRSIPINFV (106 aa).

This sequence belongs to the small heat shock protein (HSP20) family.

This is Heat shock protein Hsp-16.48/Hsp-16.49 (hsp-16.48) from Caenorhabditis elegans.